We begin with the raw amino-acid sequence, 282 residues long: Nucleotide-binding protein Ping_2894 (282 aa).

8–15 (GRSGSGKT) provides a ligand contact to ATP. 56-59 (DIRN) contacts GTP.

The protein belongs to the RapZ-like family.

Functionally, displays ATPase and GTPase activities. This Psychromonas ingrahamii (strain DSM 17664 / CCUG 51855 / 37) protein is Nucleotide-binding protein Ping_2894.